Consider the following 247-residue polypeptide: Segregation and condensation protein A (247 aa).

The protein belongs to the ScpA family. As to quaternary structure, component of a cohesin-like complex composed of ScpA, ScpB and the Smc homodimer, in which ScpA and ScpB bind to the head domain of Smc. The presence of the three proteins is required for the association of the complex with DNA.

It is found in the cytoplasm. In terms of biological role, participates in chromosomal partition during cell division. May act via the formation of a condensin-like complex containing Smc and ScpB that pull DNA away from mid-cell into both cell halves. This chain is Segregation and condensation protein A, found in Bacillus cereus (strain AH187).